A 530-amino-acid chain; its full sequence is Phosphoenolpyruvate carboxykinase (ATP) (530 aa).

Substrate contacts are provided by Arg58, Tyr195, and Lys201. Residues Lys201, His220, and 236-244 contribute to the ATP site; that span reads GLSGTGKTT. Positions 201 and 220 each coordinate Mn(2+). Asp257 lines the Mn(2+) pocket. ATP is bound by residues Glu285, Arg321, 440–441, and Thr446; that span reads RI. Arg321 provides a ligand contact to substrate.

The protein belongs to the phosphoenolpyruvate carboxykinase (ATP) family. Mn(2+) serves as cofactor.

Its subcellular location is the cytoplasm. It catalyses the reaction oxaloacetate + ATP = phosphoenolpyruvate + ADP + CO2. Its pathway is carbohydrate biosynthesis; gluconeogenesis. Functionally, involved in the gluconeogenesis. Catalyzes the conversion of oxaloacetate (OAA) to phosphoenolpyruvate (PEP) through direct phosphoryl transfer between the nucleoside triphosphate and OAA. The protein is Phosphoenolpyruvate carboxykinase (ATP) of Staphylococcus epidermidis (strain ATCC 35984 / DSM 28319 / BCRC 17069 / CCUG 31568 / BM 3577 / RP62A).